We begin with the raw amino-acid sequence, 670 residues long: Solute carrier organic anion transporter family member 1A6 (670 aa).

At 1–20 (MGEPEKRAGTHGIRCFAKIK) the chain is on the cytoplasmic side. A helical membrane pass occupies residues 21–40 (VFLLALTWAYASKALSATYM). Residues 41 to 59 (NSMLTQIERRFNISTSIVG) lie on the Extracellular side of the membrane. The N-linked (GlcNAc...) asparagine glycan is linked to Asn52. Residues 60 to 80 (LINGSFEVGNLLLIIFVSYFG) form a helical membrane-spanning segment. The Cytoplasmic segment spans residues 81 to 86 (RKRHRP). The chain crosses the membrane as a helical span at residues 87–111 (IMIGIGCAVMGLGCFIISLPHFLMG). Residues 112-155 (RYEYETTISPTSNLSSNSFLCMENRTQTLKPTQDPAECVKEMKS) are Extracellular-facing. N-linked (GlcNAc...) asparagine glycans are attached at residues Asn124 and Asn135. A helical membrane pass occupies residues 156–184 (LMWIYVLVGNIIRGIGETPIMPLGISYIE). Over 185 to 203 (DFAKSENSPFYIGILEVGK) the chain is Cytoplasmic. The chain crosses the membrane as a helical span at residues 204–224 (ITGPIAAIWLGSFCATIYVDM). The Extracellular portion of the chain corresponds to 225–242 (GSVNTDDLTITPTDTRCV). Residues 243–267 (GAWWIGFLVCAGLNILISIPFFFFP) form a helical membrane-spanning segment. Residues 268-311 (KTFPKEGPEDMANETKNDEGDKHREKAKEEKRGITKDFFLFMKS) are Cytoplasmic-facing. The tract at residues 276–295 (EDMANETKNDEGDKHREKAK) is disordered. A helical transmembrane segment spans residues 312–333 (LSCNPIYMLCVLTSVLQVNGFV). Over 334-353 (SIFTFKPKYLEHHYGKSSSE) the chain is Extracellular. A helical transmembrane segment spans residues 354 to 377 (AIFLMGLYTLPSVCVGYLISGFIM). At 378 to 381 (KKFK) the chain is on the cytoplasmic side. Residues 382-405 (ITLKKAAFISYCLGMSECLLSLCN) traverse the membrane as a helical segment. Over 406 to 513 (FMLTCDNVPI…PDCANKLQYF (108 aa)) the chain is Extracellular. In terms of domain architecture, Kazal-like spans 433 to 488 (NTVLADCNTRCSCLTKTWDPVCGDNGLAYITPCLAGCEKSVGSGINMVLQDCSCIQ). Intrachain disulfides connect Cys439–Cys469, Cys445–Cys465, and Cys454–Cys486. Asn492 carries N-linked (GlcNAc...) asparagine glycosylation. Residues 514 to 536 (LIITVFCSFFYSLSLIPGYMIFL) traverse the membrane as a helical segment. Over 537 to 545 (RCMKSEEKS) the chain is Cytoplasmic. A helical membrane pass occupies residues 546–571 (LGIGLQAFCMRILGGILAPIYFGVLI). The Extracellular segment spans residues 572 to 605 (DRTCLHWGTQKCGEPGACRTYEINSFRSIYLGLP). A helical membrane pass occupies residues 606-623 (AALRGSSYLPAFFILRLM). Residues 624-670 (RKFQFPGDINSPVTDHVEMMLTEKESEHTDVHRSPQVENDGELKTKL) lie on the Cytoplasmic side of the membrane. Ser634 is subject to Phosphoserine. The tract at residues 647–670 (KESEHTDVHRSPQVENDGELKTKL) is disordered.

It belongs to the organo anion transporter (TC 2.A.60) family.

It is found in the cell membrane. Functionally, may mediate the Na(+)-independent transport of organic anions. The polypeptide is Solute carrier organic anion transporter family member 1A6 (Slco1a6) (Rattus norvegicus (Rat)).